Consider the following 588-residue polypeptide: Succinate dehydrogenase flavoprotein subunit (588 aa).

FAD is bound by residues 14 to 19, 37 to 52, and Asp-221; these read GAGGAG and SKVF…AQGG. The residue at position 45 (His-45) is a Tele-8alpha-FAD histidine. Residues His-242 and Thr-254 each contribute to the substrate site. Arg-286 functions as the Proton acceptor in the catalytic mechanism. His-354 is a substrate binding site. Glu-388 provides a ligand contact to FAD. Arg-399 provides a ligand contact to substrate. An FAD-binding site is contributed by 404-405; the sequence is SL.

Belongs to the FAD-dependent oxidoreductase 2 family. FRD/SDH subfamily. In terms of assembly, part of an enzyme complex containing four subunits: a flavoprotein, an iron-sulfur, cytochrome b-556, and a hydrophobic anchor protein. Requires FAD as cofactor.

It is found in the cell inner membrane. It catalyses the reaction a quinone + succinate = fumarate + a quinol. It participates in carbohydrate metabolism; tricarboxylic acid cycle; fumarate from succinate (bacterial route): step 1/1. In terms of biological role, two distinct, membrane-bound, FAD-containing enzymes are responsible for the catalysis of fumarate and succinate interconversion; the fumarate reductase is used in anaerobic growth, and the succinate dehydrogenase is used in aerobic growth. This is Succinate dehydrogenase flavoprotein subunit (sdhA) from Salmonella typhimurium (strain LT2 / SGSC1412 / ATCC 700720).